The following is a 100-amino-acid chain: Small ribosomal subunit protein bS18c (100 aa).

A compositionally biased stretch (basic residues) spans 1 to 19 (MDKSKRPFRKSKRSFRRRL). Residues 1 to 23 (MDKSKRPFRKSKRSFRRRLPPIG) are disordered.

Belongs to the bacterial ribosomal protein bS18 family. In terms of assembly, part of the 30S ribosomal subunit.

The protein localises to the plastid. Its subcellular location is the chloroplast. This chain is Small ribosomal subunit protein bS18c, found in Calycanthus floridus var. glaucus (Eastern sweetshrub).